The primary structure comprises 176 residues: RNA pyrophosphohydrolase (176 aa).

Positions 6–149 (GYRPNVGIII…KRNVYEMALT (144 aa)) constitute a Nudix hydrolase domain. A Nudix box motif is present at residues 38 to 59 (GGIKPGESPEAAMYRELMEEVG).

Belongs to the Nudix hydrolase family. RppH subfamily. A divalent metal cation serves as cofactor.

Accelerates the degradation of transcripts by removing pyrophosphate from the 5'-end of triphosphorylated RNA, leading to a more labile monophosphorylated state that can stimulate subsequent ribonuclease cleavage. This Laribacter hongkongensis (strain HLHK9) protein is RNA pyrophosphohydrolase.